A 363-amino-acid chain; its full sequence is Ribonuclease P protein subunit p40 (363 aa).

As to quaternary structure, component of nuclear RNase P and RNase MRP ribonucleoproteins. RNase P consists of a catalytic RNA moiety and about 10 protein subunits; POP1, POP4, POP5, POP7, RPP14, RPP21, RPP25, RPP30, RPP38 and RPP40. Within the RNase P complex, POP1, POP7 and RPP25 form the 'finger' subcomplex, POP5, RPP14, RPP40 and homodimeric RPP30 form the 'palm' subcomplex, and RPP21, POP4 and RPP38 form the 'wrist' subcomplex. All subunits of the RNase P complex interact with the catalytic RNA. Several subunits of RNase P are also part of the RNase MRP complex. RNase MRP consists of a catalytic RNA moiety and about 8 protein subunits; POP1, POP7, RPP25, RPP30, RPP38, RPP40 and possibly also POP4 and POP5.

The protein resides in the nucleus. The protein localises to the nucleolus. Component of ribonuclease P, a ribonucleoprotein complex that generates mature tRNA molecules by cleaving their 5'-ends. Also a component of the MRP ribonuclease complex, which cleaves pre-rRNA sequences. This is Ribonuclease P protein subunit p40 (Rpp40) from Rattus norvegicus (Rat).